The chain runs to 662 residues: DNA topoisomerase 4 subunit B (662 aa).

Residues tyrosine 20, asparagine 60, aspartate 87, 129-135, and lysine 359 contribute to the ATP site; that span reads GLHGVGI. A Toprim domain is found at 439-553; it reads TELFIVEGDS…EGHLYLAKPP (115 aa). Residues glutamate 445, aspartate 518, and aspartate 520 each contribute to the Mg(2+) site.

It belongs to the type II topoisomerase family. ParE type 1 subfamily. As to quaternary structure, heterotetramer composed of ParC and ParE. It depends on Mg(2+) as a cofactor. The cofactor is Mn(2+). Ca(2+) serves as cofactor.

It catalyses the reaction ATP-dependent breakage, passage and rejoining of double-stranded DNA.. In terms of biological role, topoisomerase IV is essential for chromosome segregation. It relaxes supercoiled DNA. Performs the decatenation events required during the replication of a circular DNA molecule. The chain is DNA topoisomerase 4 subunit B from Rickettsia felis (strain ATCC VR-1525 / URRWXCal2) (Rickettsia azadi).